The sequence spans 1401 residues: Enhancer of mRNA-decapping protein 4 (1401 aa).

N-acetylalanine is present on alanine 2. A phosphoserine mark is found at serine 3 and serine 6. The tract at residues 23 to 42 (DRPAGGPSAESPRPSSAYNG) is disordered. 7 WD repeats span residues 121-164 (QPVA…VISV), 167-206 (SERTLLKGFTGSVADLAFAHLNSPQLACLDEAGNLFVWRL), 217-269 (ILVH…VWDL), 287-326 (KQGFIVVKGHSTCLSEGALSPDGTVLATASHDGYVKFWQI), 335-385 (RCLH…MWCT), 389-426 (TCLQTIRFSPDIFSSVSVPPSLKVCLDLSAEYLILSDV), and 432-475 (YVME…LRHT). Lysine 125 is modified (N6-acetyllysine). A disordered region spans residues 545–565 (TFGESRPELGSEGLGSAAHGS). A phosphoserine mark is found at serine 560, serine 565, serine 583, and serine 585. Disordered regions lie at residues 603–628 (ASLQQITASPSSSSSGSSSSSSSSSS) and 662–702 (DGSL…QVPT). Positions 609–628 (TASPSSSSSGSSSSSSSSSS) are enriched in low complexity. The span at 663–675 (GSLTMSSSGSLQA) shows a compositional bias: polar residues. Position 676 is a phosphoserine (serine 676). Positions 677 to 689 (PRGLLPGLLPAPA) are enriched in low complexity. Threonine 693 bears the Phosphothreonine mark. Serine 708, serine 723, and serine 725 each carry phosphoserine. Disordered regions lie at residues 717 to 741 (LGLPQASPSRTRSPDVISSASTALS) and 778 to 808 (LLSPRPRPGPELGPQLGLDGGPGDGDRHNTP). A compositionally biased stretch (polar residues) spans 722–741 (ASPSRTRSPDVISSASTALS). Position 727 is a phosphothreonine (threonine 727). Serine 729 and serine 741 each carry phosphoserine. Position 821 is a phosphothreonine (threonine 821). A phosphoserine mark is found at serine 844, serine 871, serine 875, serine 879, serine 887, serine 890, and serine 892. A disordered region spans residues 868 to 946 (QRDSQDASAE…RLTEHQVAEP (79 aa)). The tract at residues 913–934 (GSPRTSPKLKRKSKKDDGDAAM) is sufficient for nuclear localization. Positions 954 to 1025 (IWQQQRELAE…GGQLQEQLTQ (72 aa)) form a coiled coil. Phosphoserine is present on residues serine 967 and serine 1380.

Belongs to the WD repeat EDC4 family. As to quaternary structure, part of a decapping complex consisting of DCP1A, DCP2, EDC3, EDC4 and probably DDX6. Part of a complex consisting of DCP1A, EDC3, EDC4 and DDX6. Part of a complex consisting of DCP1B, EDC3, EDC4 and DDX6. Interacts with DCP2. Interacts with RC3H1. Interacts with NBDY. Interacts with TEX19. Interacts with LSM14A. Interacts with DDX6. In terms of assembly, (Microbial infection) Interacts with rotavirus A non-structural protein 2; this interaction probably plays a role in the sequestration of EDC4 in viral factories. Interacts with rotavirus A non-structural protein 5; this interaction probably plays a role in its sequestration in viral factories.

It localises to the cytoplasm. It is found in the P-body. The protein localises to the nucleus. Functionally, in the process of mRNA degradation, seems to play a role in mRNA decapping. Component of a complex containing DCP2 and DCP1A which functions in decapping of ARE-containing mRNAs. Promotes complex formation between DCP1A and DCP2. Enhances the catalytic activity of DCP2 (in vitro). The sequence is that of Enhancer of mRNA-decapping protein 4 (EDC4) from Homo sapiens (Human).